We begin with the raw amino-acid sequence, 237 residues long: Endoglucanase-1 (237 aa).

The N-terminal stretch at 1-16 (MKAFHLLAALAGAAVA) is a signal peptide. At Gln-17 the chain carries Pyrrolidone carboxylic acid.

The protein belongs to the glycosyl hydrolase 12 (cellulase H) family.

The protein resides in the secreted. It catalyses the reaction Endohydrolysis of (1-&gt;4)-beta-D-glucosidic linkages in cellulose, lichenin and cereal beta-D-glucans.. The chain is Endoglucanase-1 from Aspergillus aculeatus.